Reading from the N-terminus, the 131-residue chain is Histone H2A.1 (131 aa).

Serine 2 bears the N-acetylserine mark. Lysine 5 and lysine 8 each carry N6-acetyllysine. N5-methylglutamine is present on glutamine 106. Serine 128 is subject to Phosphoserine. Positions 128–129 match the [ST]-Q motif motif; the sequence is SQ.

It belongs to the histone H2A family. The nucleosome is a histone octamer containing two molecules each of H2A, H2B, H3 and H4 assembled in one H3-H4 heterotetramer and two H2A-H2B heterodimers. The octamer wraps approximately 147 bp of DNA. Post-translationally, phosphorylated to form H2AS128ph (gamma-H2A) in response to DNA double-strand breaks (DSBs) generated by exogenous genotoxic agents and by stalled replication forks. Phosphorylation is dependent on the DNA damage checkpoint kinases MEC1/ATR and TEL1/ATM, spreads on either side of a detected DSB site and may mark the surrounding chromatin for recruitment of proteins required for DNA damage signaling and repair. Gamma-H2A is removed from the DNA prior to the strand invasion-primer extension step of the repair process and subsequently dephosphorylated by PPH3, a component of the histone H2A phosphatase complex (HTP-C). Dephosphorylation is necessary for efficient recovery from the DNA damage checkpoint. In terms of processing, acetylated by ESA1 to form H2AK4ac and H2AK7ac.

It localises to the nucleus. It is found in the chromosome. In terms of biological role, core component of nucleosome which plays a central role in DNA double strand break (DSB) repair. Nucleosomes wrap and compact DNA into chromatin, limiting DNA accessibility to the cellular machineries which require DNA as a template. Histones thereby play a central role in transcription regulation, DNA repair, DNA replication and chromosomal stability. DNA accessibility is regulated via a complex set of post-translational modifications of histones, also called histone code, and nucleosome remodeling. The sequence is that of Histone H2A.1 (HTA1) from Candida glabrata (strain ATCC 2001 / BCRC 20586 / JCM 3761 / NBRC 0622 / NRRL Y-65 / CBS 138) (Yeast).